The following is a 193-amino-acid chain: Ion-translocating oxidoreductase complex subunit A (193 aa).

6 helical membrane passes run 5 to 25 (LLLL…FLGL), 39 to 59 (IGMG…SYLM), 63 to 83 (ILIP…VIAV), 102 to 122 (LLGI…VALL), 134 to 154 (IIYG…FAAM), and 171 to 191 (SIAM…TGLI).

The protein belongs to the NqrDE/RnfAE family. The complex is composed of six subunits: RnfA, RnfB, RnfC, RnfD, RnfE and RnfG.

It localises to the cell inner membrane. Its function is as follows. Part of a membrane-bound complex that couples electron transfer with translocation of ions across the membrane. The sequence is that of Ion-translocating oxidoreductase complex subunit A from Aeromonas hydrophila subsp. hydrophila (strain ATCC 7966 / DSM 30187 / BCRC 13018 / CCUG 14551 / JCM 1027 / KCTC 2358 / NCIMB 9240 / NCTC 8049).